The chain runs to 184 residues: GTP cyclohydrolase 1 (184 aa).

Zn(2+) contacts are provided by Cys-75, His-78, and Cys-146.

Belongs to the GTP cyclohydrolase I family. Homomer.

The enzyme catalyses GTP + H2O = 7,8-dihydroneopterin 3'-triphosphate + formate + H(+). The protein operates within cofactor biosynthesis; 7,8-dihydroneopterin triphosphate biosynthesis; 7,8-dihydroneopterin triphosphate from GTP: step 1/1. In Streptococcus pneumoniae (strain Hungary19A-6), this protein is GTP cyclohydrolase 1.